Here is a 129-residue protein sequence, read N- to C-terminus: Small ribosomal subunit protein uS12 (129 aa).

Aspartate 89 bears the 3-methylthioaspartic acid mark. The interval 110 to 129 (RKQGRSRYGAPRKQVVATKK) is disordered.

It belongs to the universal ribosomal protein uS12 family. Part of the 30S ribosomal subunit. Contacts proteins S8 and S17. May interact with IF1 in the 30S initiation complex.

Functionally, with S4 and S5 plays an important role in translational accuracy. In terms of biological role, interacts with and stabilizes bases of the 16S rRNA that are involved in tRNA selection in the A site and with the mRNA backbone. Located at the interface of the 30S and 50S subunits, it traverses the body of the 30S subunit contacting proteins on the other side and probably holding the rRNA structure together. The combined cluster of proteins S8, S12 and S17 appears to hold together the shoulder and platform of the 30S subunit. This chain is Small ribosomal subunit protein uS12, found in Rickettsia bellii (strain RML369-C).